The primary structure comprises 116 residues: POU domain, class 4, transcription factor 1 (116 aa).

Residues 1 to 54 form the POU-specific domain; sequence VTQADVGSALANLKIPGVGSLSQSTICRFESLTLSHNNMIALKPILQAWLEEAE. A disordered region spans residues 56–79; that stretch reads AQREKMNKPELFNGGEKKRKRTSI. Positions 72 to 116 form a DNA-binding region, homeobox; it reads KKRKRTSIAAPEKRSLEAYFAVQPRPSSEKIAAIAEKLDLKKNVV.

The protein belongs to the POU transcription factor family. Class-4 subfamily.

It is found in the nucleus. The protein localises to the cytoplasm. Functionally, multifunctional transcription factor with different regions mediating its different effects. Acts by binding (via its C-terminal domain) to sequences related to the consensus octamer motif 5'-ATGCAAAT-3' in the regulatory regions of its target genes. Regulates the expression of specific genes involved in differentiation and survival within a subset of neuronal lineages. It has been shown that activation of some of these genes requires its N-terminal domain, maybe through a neuronal-specific cofactor. The polypeptide is POU domain, class 4, transcription factor 1 (POU4F1) (Gallus gallus (Chicken)).